Consider the following 243-residue polypeptide: Urease accessory protein UreF (243 aa).

This sequence belongs to the UreF family. UreD, UreF and UreG form a complex that acts as a GTP-hydrolysis-dependent molecular chaperone, activating the urease apoprotein by helping to assemble the nickel containing metallocenter of UreC. The UreE protein probably delivers the nickel.

It localises to the cytoplasm. In terms of biological role, required for maturation of urease via the functional incorporation of the urease nickel metallocenter. The polypeptide is Urease accessory protein UreF (Xanthobacter autotrophicus (strain ATCC BAA-1158 / Py2)).